Reading from the N-terminus, the 79-residue chain is Sulfur carrier protein TusA (79 aa).

Catalysis depends on C17, which acts as the Cysteine persulfide intermediate.

Belongs to the sulfur carrier protein TusA family.

The protein localises to the cytoplasm. Functionally, sulfur carrier protein which probably makes part of a sulfur-relay system. This is Sulfur carrier protein TusA from Haemophilus influenzae (strain PittEE).